The primary structure comprises 382 residues: Mannitol-1-phosphate 5-dehydrogenase (382 aa).

3–14 (AIHFGAGNIGRG) lines the NAD(+) pocket.

The protein belongs to the mannitol dehydrogenase family.

It carries out the reaction D-mannitol 1-phosphate + NAD(+) = beta-D-fructose 6-phosphate + NADH + H(+). This chain is Mannitol-1-phosphate 5-dehydrogenase, found in Psychromonas ingrahamii (strain DSM 17664 / CCUG 51855 / 37).